We begin with the raw amino-acid sequence, 396 residues long: Vitamin K-dependent protein Z (396 aa).

A Gla domain is found at 1–46 (AGSYLLEELFEGHLEKECWEEICVYEEAREVFEDDETTDEFWRTYM). Glutamate 7, glutamate 8, glutamate 11, glutamate 15, glutamate 17, glutamate 20, glutamate 21, glutamate 26, glutamate 27, glutamate 30, glutamate 33, glutamate 36, and glutamate 40 each carry 4-carboxyglutamate. An intrachain disulfide couples cysteine 18 to cysteine 23. 2 EGF-like domains span residues 47–83 (GGSP…PNCA) and 85–126 (AESE…RSCL). 7 cysteine pairs are disulfide-bonded: cysteine 51/cysteine 62, cysteine 56/cysteine 71, cysteine 73/cysteine 82, cysteine 89/cysteine 101, cysteine 97/cysteine 110, cysteine 112/cysteine 125, and cysteine 169/cysteine 185. An O-linked (Glc...) serine glycan is attached at serine 53. Asparagine 59 carries N-linked (GlcNAc...) asparagine glycosylation. (3R)-3-hydroxyaspartate is present on aspartate 64. The Peptidase S1 domain maps to 135 to 357 (TLGPECCQRP…YALWLRQVTQ (223 aa)). Asparagine 191 and asparagine 289 each carry an N-linked (GlcNAc...) asparagine glycan. An intrachain disulfide couples cysteine 284 to cysteine 298. Residues 356–396 (TQQPSRASPRGDRGQGRDGEPVPGDRGGRWAPTALPPGPLV) form a disordered region. The span at 364 to 375 (PRGDRGQGRDGE) shows a compositional bias: basic and acidic residues. A glycan (O-linked (GalNAc...) threonine) is linked at threonine 388.

This sequence belongs to the peptidase S1 family. The iron and 2-oxoglutarate dependent 3-hydroxylation of aspartate and asparagine is (R) stereospecific within EGF domains. Plasma.

Its subcellular location is the secreted. Its function is as follows. Inhibits activity of the coagulation protease factor Xa in the presence of SERPINA10, calcium and phospholipids. Appears to assist hemostasis by binding thrombin and promoting its association with phospholipid vesicles. This Bos taurus (Bovine) protein is Vitamin K-dependent protein Z (PROZ).